The primary structure comprises 83 residues: MTLQNESINRVENRKKYCRFKKMGIFYIDYKDPNFLLKFVNEQGKILPRRLTGTSLKYQRKVSQAVKRARLIGLLPYVTDSLK.

Belongs to the bacterial ribosomal protein bS18 family. In terms of assembly, part of the 30S ribosomal subunit. Forms a tight heterodimer with protein bS6.

In terms of biological role, binds as a heterodimer with protein bS6 to the central domain of the 16S rRNA, where it helps stabilize the platform of the 30S subunit. This chain is Small ribosomal subunit protein bS18, found in Cytophaga hutchinsonii (strain ATCC 33406 / DSM 1761 / CIP 103989 / NBRC 15051 / NCIMB 9469 / D465).